We begin with the raw amino-acid sequence, 43 residues long: MEPATVLSIAIGSILLVITGFAIYTAFGPPSAQLSDPFEDHED.

A helical transmembrane segment spans residues 7–27 (LSIAIGSILLVITGFAIYTAF).

The protein belongs to the PsbN family.

The protein localises to the cellular thylakoid membrane. In terms of biological role, may play a role in photosystem I and II biogenesis. This chain is Protein PsbN, found in Crocosphaera subtropica (strain ATCC 51142 / BH68) (Cyanothece sp. (strain ATCC 51142)).